Here is a 344-residue protein sequence, read N- to C-terminus: Heat-inducible transcription repressor HrcA (344 aa).

It belongs to the HrcA family.

In terms of biological role, negative regulator of class I heat shock genes (grpE-dnaK-dnaJ and groELS operons). Prevents heat-shock induction of these operons. In Anoxybacillus flavithermus (strain DSM 21510 / WK1), this protein is Heat-inducible transcription repressor HrcA.